The following is a 349-amino-acid chain: N-formyl peptide receptor 3 (349 aa).

The Extracellular portion of the chain corresponds to 1–27; that stretch reads METNFSIPLNETEEVLPEPAGHTVLWI. Residues Asn-4 and Asn-10 are each glycosylated (N-linked (GlcNAc...) asparagine). The chain crosses the membrane as a helical span at residues 28–50; the sequence is FSLLVHGVTFIFGVLGNGLVIWV. At 51–61 the chain is on the cytoplasmic side; sequence AGFLMTRTVNT. The helical transmembrane segment at 62 to 83 threads the bilayer; it reads ICYLNLALADFSFSAILPFHMV. The Extracellular segment spans residues 84 to 100; it reads SVAMREKWPFGSFLCKL. Cys-98 and Cys-176 are oxidised to a cystine. Residues 101–121 form a helical membrane-spanning segment; that stretch reads VHVMIDINLFVSVYLITIIAL. Residues 122-140 are Cytoplasmic-facing; it reads DRCICVLHPAWAQNHRTMS. The chain crosses the membrane as a helical span at residues 141 to 162; that stretch reads LAKRVMTGLWILTIVLTLPNFI. At 163 to 205 the chain is on the extracellular side; the sequence is FWTTISTTNGDTYCIFNFPFWGDTAVERLNVFITMAKVFLILH. Residues 206–226 form a helical membrane-spanning segment; sequence FIIGFSMPMSIITVCYGIIAA. Residues 227-242 lie on the Cytoplasmic side of the membrane; sequence KIHRNHMIKSSRPLRV. Residues 243-266 traverse the membrane as a helical segment; that stretch reads FAAVVASFFICWFPYELIGILMAV. Over 267–286 the chain is Extracellular; it reads WLKEMLLNGKYKIILVLINP. The helical transmembrane segment at 287–306 threads the bilayer; the sequence is TSSLAFFNSCLNPILYVFLG. Residues 307-349 lie on the Cytoplasmic side of the membrane; sequence SNFQERLIRSLPTSLERALTEVPDSAQTSNTHTTSASPPEETE. Residues 327 to 349 are disordered; sequence EVPDSAQTSNTHTTSASPPEETE. A compositionally biased stretch (polar residues) spans 331–343; the sequence is SAQTSNTHTTSAS.

The protein belongs to the G-protein coupled receptor 1 family.

The protein localises to the cell membrane. In terms of biological role, low affinity receptor for N-formyl-methionyl peptides, which are powerful neutrophils chemotactic factors. Binding of FMLP to the receptor causes activation of neutrophils. This response is mediated via a G-protein that activates a phosphatidylinositol-calcium second messenger system. The protein is N-formyl peptide receptor 3 (FPR3) of Gorilla gorilla gorilla (Western lowland gorilla).